Reading from the N-terminus, the 898-residue chain is Cilium assembly protein DZIP1 (898 aa).

A disordered region spans residues 14-66; the sequence is DPPGTHSSAGIPSLLSSPQSQPSSGSQSRPAPSTMSGPLTSSGASTSIPPPFK. Low complexity predominate over residues 25–46; that stretch reads PSLLSSPQSQPSSGSQSRPAPS. Polar residues predominate over residues 47–60; the sequence is TMSGPLTSSGASTS. Residues 145–197 are a coiled coil; that stretch reads LSISLQAAEERLLAEAREREQICVQLQKKTQDAKALKEELKQRKKIIASQQAM. The C2H2-type zinc finger occupies 207–230; it reads HKCQHCEKAFMNASFLQSHMQRRH. 2 coiled-coil regions span residues 242-353 and 407-447; these read NQKK…VQTQ and SAVS…ISSK. Positions 435–463 are enriched in polar residues; sequence TSQNKQMKQISSKPPTITVQREGVSTPSP. 3 disordered regions span residues 435 to 509, 585 to 739, and 773 to 878; these read TSQN…SWQK, EQRV…WTDG, and KSLE…DAGT. The segment covering 495-505 has biased composition (low complexity); sequence SSISESPTENR. Residues 573–590 are a coiled coil; sequence YRRALKEISHKLEQRVKE. The segment covering 605–652 has biased composition (polar residues); the sequence is VVQSRPRSSSFPSTVTRVMSGPASKQQRTPQPVPRSRTNVPHKTSTPL. Residues 662-684 show a composition bias toward acidic residues; it reads SDEDSSEEEEEEEEEEESSDEES. Polar residues-rich tracts occupy residues 685–715 and 723–734; these read PQMQ…QSVR and AEPTNVTTLSDS. The segment covering 797-815 has biased composition (basic and acidic residues); it reads KPTDVRNTRQNAKKELKYS. Acidic residues predominate over residues 816 to 826; that stretch reads DDDDDDDDDWD. Over residues 855–866 the composition is skewed to polar residues; that stretch reads DTSTSVWGSSTG.

It belongs to the DZIP C2H2-type zinc-finger protein family. Expressed throughout the embryo starting at 12 hours.

The protein resides in the cell projection. It is found in the cilium. The protein localises to the cytoplasm. It localises to the cytoskeleton. Its subcellular location is the cilium basal body. The protein resides in the microtubule organizing center. It is found in the centrosome. The protein localises to the centriole. It localises to the nucleus. In terms of biological role, molecular adapter that recruits protein complexes required for cilium assembly and function to the cilium basal body. Required for establishment of left-right asymmetry during embryogenesis. Acts as a permissive factor that is required for the proper regulation of Hedgehog (Hh) target genes in response to Hh signals. Acts downstream of the Smoothened protein to modulate Gli activity in the somites of the developing embryo. The sequence is that of Cilium assembly protein DZIP1 (dzip1) from Danio rerio (Zebrafish).